We begin with the raw amino-acid sequence, 353 residues long: T-complex protein 1 subunit eta (353 aa).

This sequence belongs to the TCP-1 chaperonin family. As to quaternary structure, heterooligomeric complex of about 850 to 900 kDa that forms two stacked rings, 12 to 16 nm in diameter.

It is found in the cytoplasm. Its function is as follows. Molecular chaperone; assists the folding of proteins upon ATP hydrolysis. Known to play a role, in vitro, in the folding of actin and tubulin. The protein is T-complex protein 1 subunit eta of Tetrahymena thermophila.